The chain runs to 355 residues: Guanine nucleotide-binding protein alpha-2 subunit (355 aa).

Positions 1–20 are disordered; that stretch reads MCFGGRGKDDEAEASRSREL. The G-alpha domain maps to 33 to 355; sequence KEVKLLLLGA…IQRNLKQLIL (323 aa). The G1 motif stretch occupies residues 36–49; that stretch reads KLLLLGAGESGKST. Glu44, Ser45, Gly46, Lys47, Ser48, Thr49, Asp151, Leu176, Thr182, Gly204, Asn270, Lys271, Asp273, and Ala328 together coordinate GTP. Ser48 is a binding site for Mg(2+). Residues 174–182 form a G2 motif region; that stretch reads DLLRSRLRT. Residue Thr182 participates in Mg(2+) binding. The tract at residues 197 to 206 is G3 motif; it reads YRMFDVGGQR. A G4 motif region spans residues 266 to 273; it reads ILFLNKID. A G5 motif region spans residues 326–331; the sequence is TNATDT.

Belongs to the G-alpha family. G(q) subfamily. G proteins are composed of 3 units; alpha, beta and gamma. The alpha chain contains the guanine nucleotide binding site. Mg(2+) is required as a cofactor.

In terms of biological role, guanine nucleotide-binding proteins (G proteins) are involved as modulators or transducers in various transmembrane signaling systems. The sequence is that of Guanine nucleotide-binding protein alpha-2 subunit (gna-2) from Neurospora crassa (strain ATCC 24698 / 74-OR23-1A / CBS 708.71 / DSM 1257 / FGSC 987).